Here is a 24-residue protein sequence, read N- to C-terminus: Ascaphin-7 (24 aa).

Expressed by the skin glands.

It localises to the secreted. Functionally, antimicrobial peptide that shows higher potency against Gram-negative bacteria than against Gram-positive bacteria. Has a very week hemolytic activity. The polypeptide is Ascaphin-7 (Ascaphus truei (Coastal tailed frog)).